Here is a 330-residue protein sequence, read N- to C-terminus: MLTSAKILLISILSSLLLFGSHGEEGQKTNTTESTAEDLKTMENQSVPLESKANLTSDKENRETSNPKASNFSFEDPSNKTHETGFYSNLSTDNSSRSPSLMPTLSPRSPSTHSFVSKLPWNSSIADNSLLPASAPPNTTVPVSSENFTLSSINDTMKAPDNSSITVSNLPSGPNTTSVTPMVTEGWPTTTRESMEGFTVYQETTLHPTLKFTNNSKIFPNTSDPQEENRNTGVVFGAILGAILGASLLSLVGYLLCGKRKTDSFSHRRLYDDRNEPVLRLDNAPEPYDMSFGNSSYYNPTANDSSTSAGGENAHDSIPMDDIPPLRTSV.

The first 23 residues, 1–23, serve as a signal peptide directing secretion; it reads MLTSAKILLISILSSLLLFGSHG. A disordered region spans residues 23–115; it reads GEEGQKTNTT…SPRSPSTHSF (93 aa). Residues 24-232 are Extracellular-facing; it reads EEGQKTNTTE…SDPQEENRNT (209 aa). N-linked (GlcNAc...) asparagine glycosylation is found at N30, N44, N54, N71, N79, N89, N94, N122, N138, N147, N154, N162, N175, N214, and N221. Over residues 42–56 the composition is skewed to polar residues; sequence MENQSVPLESKANLT. A compositionally biased stretch (polar residues) spans 86 to 115; that stretch reads FYSNLSTDNSSRSPSLMPTLSPRSPSTHSF. A disordered region spans residues 164–185; the sequence is SITVSNLPSGPNTTSVTPMVTE. A helical membrane pass occupies residues 233-253; the sequence is GVVFGAILGAILGASLLSLVG. The Cytoplasmic portion of the chain corresponds to 254-330; sequence YLLCGKRKTD…DDIPPLRTSV (77 aa). Residues 279–330 form a disordered region; the sequence is LRLDNAPEPYDMSFGNSSYYNPTANDSSTSAGGENAHDSIPMDDIPPLRTSV. Residues 292 to 310 are compositionally biased toward polar residues; that stretch reads FGNSSYYNPTANDSSTSAG.

Highly glycosylated (N- and O-linked carbohydrates). Mainly expressed on apical surfaces of the mammary epithelial cells.

Its subcellular location is the cell membrane. The protein resides in the secreted. The protein is Mucin-15 (MUC15) of Bos taurus (Bovine).